The chain runs to 274 residues: Hydroxyethylthiazole kinase (274 aa).

Met-46 serves as a coordination point for substrate. Positions 122 and 173 each coordinate ATP. A substrate-binding site is contributed by Gly-200.

It belongs to the Thz kinase family. Requires Mg(2+) as cofactor.

It catalyses the reaction 5-(2-hydroxyethyl)-4-methylthiazole + ATP = 4-methyl-5-(2-phosphooxyethyl)-thiazole + ADP + H(+). Its pathway is cofactor biosynthesis; thiamine diphosphate biosynthesis; 4-methyl-5-(2-phosphoethyl)-thiazole from 5-(2-hydroxyethyl)-4-methylthiazole: step 1/1. Catalyzes the phosphorylation of the hydroxyl group of 4-methyl-5-beta-hydroxyethylthiazole (THZ). This Clostridium tetani (strain Massachusetts / E88) protein is Hydroxyethylthiazole kinase.